The following is an 81-amino-acid chain: Cytochrome b559 subunit alpha (81 aa).

Residues 21–35 (VIHSITIPSLFVSGW) traverse the membrane as a helical segment. Residue H23 participates in heme binding.

The protein belongs to the PsbE/PsbF family. As to quaternary structure, heterodimer of an alpha subunit and a beta subunit. PSII is composed of 1 copy each of membrane proteins PsbA, PsbB, PsbC, PsbD, PsbE, PsbF, PsbH, PsbI, PsbJ, PsbK, PsbL, PsbM, PsbT, PsbX, PsbY, PsbZ, Psb30/Ycf12, at least 3 peripheral proteins of the oxygen-evolving complex and a large number of cofactors. It forms dimeric complexes. The cofactor is heme b.

The protein localises to the plastid. Its subcellular location is the chloroplast thylakoid membrane. Its function is as follows. This b-type cytochrome is tightly associated with the reaction center of photosystem II (PSII). PSII is a light-driven water:plastoquinone oxidoreductase that uses light energy to abstract electrons from H(2)O, generating O(2) and a proton gradient subsequently used for ATP formation. It consists of a core antenna complex that captures photons, and an electron transfer chain that converts photonic excitation into a charge separation. The polypeptide is Cytochrome b559 subunit alpha (Mesostigma viride (Green alga)).